The sequence spans 327 residues: GTPase Obg (327 aa).

Positions 1-159 (MKFVDSARIV…LKVDLELKLM (159 aa)) constitute an Obg domain. Residues 120–145 (GGDGGRGNPHFTTSTRQAPRYAEPGG) form a disordered region. An OBG-type G domain is found at 160 to 323 (ADVGLVGFPN…LRNALWNTIN (164 aa)). GTP is bound by residues 166 to 173 (GFPNAGKS), 191 to 195 (FTTLV), 213 to 216 (DIPG), 280 to 283 (TKMD), and 304 to 306 (SSI). Residues Ser173 and Thr193 each contribute to the Mg(2+) site.

Belongs to the TRAFAC class OBG-HflX-like GTPase superfamily. OBG GTPase family. As to quaternary structure, monomer. The cofactor is Mg(2+).

Its subcellular location is the cytoplasm. An essential GTPase which binds GTP, GDP and possibly (p)ppGpp with moderate affinity, with high nucleotide exchange rates and a fairly low GTP hydrolysis rate. Plays a role in control of the cell cycle, stress response, ribosome biogenesis and in those bacteria that undergo differentiation, in morphogenesis control. The sequence is that of GTPase Obg from Prosthecochloris aestuarii (strain DSM 271 / SK 413).